A 748-amino-acid chain; its full sequence is MEKEKVSLADAKEHGLTETEFVEIQKILGRIPNSTELGIFSAMWSEHCSYKNSILKLKTLPTKSDKLLAGAGEENAGAMDIGDGLAVVFKIESHNHPTAVEPYQGAATGVGGIMRDIFTMGARPITSLNSLRFGDPKEPRNKYLLTRAVKGIGDYGNSLGIAVGGGELFLHPTFTKNPLVNAMTVGIAKHDEMASASTKGKVGNKVYIVGATTGRDGIHGASFASKDLTKESEEKRSAVQVGDPFMEKLLMEASLEAIQKKLLVGIQDMGAAGISCATSEMSAKGKTGMDVDLDKVPLREADMNAYEIMLSESQERMLVIPEVGKEGELVSIFHKWGLNAVEIGTVTADGILRIRKNGTLKAEIPAESLVLGGGAPRYVREEKRPTYLDEVVKFDPNKIPDLKPDTVPQTLNSLLSSLNISSRRPLYEQYDTEVGLVKVVEPGEDGGLVRIPGTKKGIAVATDCNSRYTYLNPYEGAQIAVCESARNVAATGAEPYGVTNNLNFGNPYIPENYYVFSECVRGLGDACRFLGLPVTGGNVSFYNESPEGPVFPTPTIGMVGVIDDVAKGLRTYPRTKEDVKYALVGNFQPTISASEYLYRSQGLDTGAIPNISLEKEKQTMDALIECRKNGLLTSAKDLSLGGLLVALAKIVIAGKKGVEVNLNELQTKVPRLDALCFGETGASFIVSFLPNDETKVRESFTSKGLSVYTLGSSSAKASLSVKGDGFHWEWTTKSLEVEFESGLKSYFE.

The active site involves His47. 2 residues coordinate ATP: Tyr50 and Lys90. Mg(2+) is bound at residue Glu92. Substrate is bound by residues 93 to 96 and Arg115; that span reads SHNH. The active-site Proton acceptor is His94. Asp116 is a Mg(2+) binding site. Gln240 serves as a coordination point for substrate. Asp268 contributes to the Mg(2+) binding site. A substrate-binding site is contributed by 312–314; it reads ESQ. Residues Asn500 and Gly537 each coordinate ATP. A Mg(2+)-binding site is contributed by Asn538. Substrate is bound at residue Ser540.

This sequence belongs to the FGAMS family. As to quaternary structure, monomer. Part of the FGAM synthase complex composed of 1 PurL, 1 PurQ and 2 PurS subunits.

The protein localises to the cytoplasm. The enzyme catalyses N(2)-formyl-N(1)-(5-phospho-beta-D-ribosyl)glycinamide + L-glutamine + ATP + H2O = 2-formamido-N(1)-(5-O-phospho-beta-D-ribosyl)acetamidine + L-glutamate + ADP + phosphate + H(+). The protein operates within purine metabolism; IMP biosynthesis via de novo pathway; 5-amino-1-(5-phospho-D-ribosyl)imidazole from N(2)-formyl-N(1)-(5-phospho-D-ribosyl)glycinamide: step 1/2. Part of the phosphoribosylformylglycinamidine synthase complex involved in the purines biosynthetic pathway. Catalyzes the ATP-dependent conversion of formylglycinamide ribonucleotide (FGAR) and glutamine to yield formylglycinamidine ribonucleotide (FGAM) and glutamate. The FGAM synthase complex is composed of three subunits. PurQ produces an ammonia molecule by converting glutamine to glutamate. PurL transfers the ammonia molecule to FGAR to form FGAM in an ATP-dependent manner. PurS interacts with PurQ and PurL and is thought to assist in the transfer of the ammonia molecule from PurQ to PurL. This Leptospira biflexa serovar Patoc (strain Patoc 1 / Ames) protein is Phosphoribosylformylglycinamidine synthase subunit PurL.